Reading from the N-terminus, the 406-residue chain is UPF0761 membrane protein NMB0524 (406 aa).

Helical transmembrane passes span 43–63 (LLAL…FPVF), 100–120 (LTAI…RTID), 139–159 (FLVY…GISF), 176–196 (WSGA…LWGL), 210–230 (AFVG…LFTW), and 248–268 (VPFF…GAVL).

Belongs to the UPF0761 family.

Its subcellular location is the cell inner membrane. This is UPF0761 membrane protein NMB0524 from Neisseria meningitidis serogroup B (strain ATCC BAA-335 / MC58).